A 420-amino-acid polypeptide reads, in one-letter code: Sodium-dependent phosphate transport protein 4 (420 aa).

The tract at residues 1–21 (MATKTELSPTARESKNAQDMQ) is disordered. Residues N49, N60, N68, and N77 are each glycosylated (N-linked (GlcNAc...) asparagine). 8 helical membrane passes run 126–146 (SIALSGMLLGCFTAILIGGFI), 154–174 (FVFYIFGGVGCVCCLLWFVVI), 218–238 (IWSICLGCFSHQWLVSTMVVY), 256–276 (LLSALPFIVAWVIGMVGGYLA), 292–314 (IATILGSLPSSALIVSLPYLNSG), 319–341 (TALLTLSCGLSTLCQSGIYINVL), 357–377 (GFSSIAPVIVPTVSGFLLSQD), and 385–405 (VFFLLFAVNLLGLLFYLIFGE).

The protein belongs to the major facilitator superfamily. Sodium/anion cotransporter family. As to expression, expressed in the liver and kidney. It is detected in proximal tubules in renal cortex as well as some tubules and glomeruli, with highest expression at the apical side of proximal tubules (at protein level).

The protein resides in the endoplasmic reticulum membrane. It localises to the cell membrane. The catalysed reaction is urate(in) + Na(+)(out) = urate(out) + Na(+)(in). Transports organic anions in a voltage-driven, multispecific, manner, on the apical side of renal proximal tubule. In particular, participates in the secretion of urate from the cell into the lumen. Urate is the end product of purine metabolism. May have roles in the metabolism and secretion of estrone sulfate, estradiol-17-beta-glucuronide, ochratoxin A, as wells as drugs such as bumetanide. The protein is Sodium-dependent phosphate transport protein 4 (SLC17A3) of Homo sapiens (Human).